The sequence spans 284 residues: Actin-like protein ARP10 (284 aa).

Belongs to the actin family. ARP10 subfamily. Self-associates. Component of the dynactin complex composed of at least ARP1, JNM1, NIP100 and ARP10. Dynactin comprises a short rod of the ARP1 filament attached to ARP10 at its pointed-end and probably associated with the capping protein at its barbed-end. The rod is implicated in dynein cargo binding. A sidearm formed by NIP100 projects from the ARP1 filament and is implicated in motor binding. Interacts with ARP1 and JNM1.

The protein resides in the cytoplasm. The protein localises to the cytoskeleton. Its function is as follows. Pointed-end-associated component of the dynactin complex which assists cytoplasmic dynein by increasing its processivity and by regulation of its cargo binding. The dynactin complex is required for the spindle translocation late in anaphase and is involved in a cell wall synthesis checkpoint. May regulate the association of the dynactin complex with the plasma membrane. This chain is Actin-like protein ARP10 (ARP10), found in Saccharomyces cerevisiae (strain ATCC 204508 / S288c) (Baker's yeast).